A 281-amino-acid polypeptide reads, in one-letter code: ATP phosphoribosyltransferase (281 aa).

Belongs to the ATP phosphoribosyltransferase family. Long subfamily. In terms of assembly, equilibrium between an active dimeric form, an inactive hexameric form and higher aggregates. Interconversion between the various forms is largely reversible and is influenced by the natural substrates and inhibitors of the enzyme. Mg(2+) serves as cofactor.

The protein localises to the cytoplasm. It carries out the reaction 1-(5-phospho-beta-D-ribosyl)-ATP + diphosphate = 5-phospho-alpha-D-ribose 1-diphosphate + ATP. It functions in the pathway amino-acid biosynthesis; L-histidine biosynthesis; L-histidine from 5-phospho-alpha-D-ribose 1-diphosphate: step 1/9. Its activity is regulated as follows. Feedback inhibited by histidine. In terms of biological role, catalyzes the condensation of ATP and 5-phosphoribose 1-diphosphate to form N'-(5'-phosphoribosyl)-ATP (PR-ATP). Has a crucial role in the pathway because the rate of histidine biosynthesis seems to be controlled primarily by regulation of HisG enzymatic activity. The chain is ATP phosphoribosyltransferase from Mycolicibacterium gilvum (strain PYR-GCK) (Mycobacterium gilvum (strain PYR-GCK)).